A 250-amino-acid polypeptide reads, in one-letter code: Probable transcriptional regulatory protein SYNAS_07390 (250 aa).

The protein belongs to the TACO1 family.

The protein localises to the cytoplasm. This chain is Probable transcriptional regulatory protein SYNAS_07390, found in Syntrophus aciditrophicus (strain SB).